The primary structure comprises 495 residues: Cysteine--tRNA ligase (495 aa).

C29 lines the Zn(2+) pocket. Positions 31–41 (PTVYDYGHIGN) match the 'HIGH' region motif. The Zn(2+) site is built by C211, H236, and E240. Positions 268 to 272 (KMSKS) match the 'KMSKS' region motif. K271 contacts ATP.

This sequence belongs to the class-I aminoacyl-tRNA synthetase family. As to quaternary structure, monomer. Zn(2+) serves as cofactor.

It is found in the cytoplasm. The enzyme catalyses tRNA(Cys) + L-cysteine + ATP = L-cysteinyl-tRNA(Cys) + AMP + diphosphate. The sequence is that of Cysteine--tRNA ligase from Koribacter versatilis (strain Ellin345).